The chain runs to 60 residues: Naniproin (60 aa).

Cystine bridges form between cysteine 3-cysteine 21, cysteine 14-cysteine 38, cysteine 42-cysteine 53, and cysteine 54-cysteine 59.

Belongs to the three-finger toxin family. Short-chain subfamily. Type IA cytotoxin sub-subfamily. As to quaternary structure, monomer in solution; Homodimer and oligomer in the presence of negatively charged lipids forming a pore with a size ranging between 20 and 30 angstroms. Expressed by the venom gland.

Its subcellular location is the secreted. It localises to the target cell membrane. Basic protein that binds to cell membrane and depolarizes cardiomyocytes. This cytotoxin also possesses lytic activity on many other cells, including red blood cells. Interaction with sulfatides in the cell membrane induces pore formation and cell internalization and is responsible for cytotoxicity in cardiomyocytes. It targets the mitochondrial membrane and induces mitochondrial swelling and fragmentation. Inhibits protein kinases C. It binds to the integrin alpha-V/beta-3 with a moderate affinity. In Naja nigricollis (Black-necked spitting cobra), this protein is Naniproin.